A 304-amino-acid chain; its full sequence is Ribonuclease Z (304 aa).

Positions 63, 65, 67, 68, 141, 208, and 266 each coordinate Zn(2+). The active-site Proton acceptor is the aspartate 67.

Belongs to the RNase Z family. In terms of assembly, homodimer. It depends on Zn(2+) as a cofactor.

It carries out the reaction Endonucleolytic cleavage of RNA, removing extra 3' nucleotides from tRNA precursor, generating 3' termini of tRNAs. A 3'-hydroxy group is left at the tRNA terminus and a 5'-phosphoryl group is left at the trailer molecule.. Its function is as follows. Zinc phosphodiesterase, which displays some tRNA 3'-processing endonuclease activity. Probably involved in tRNA maturation, by removing a 3'-trailer from precursor tRNA. The sequence is that of Ribonuclease Z from Chlamydia trachomatis serovar D (strain ATCC VR-885 / DSM 19411 / UW-3/Cx).